Reading from the N-terminus, the 548-residue chain is Chaperonin GroEL (548 aa).

Residues 30–33 (TLGP), lysine 51, 87–91 (DGTTT), glycine 415, 478–480 (NAA), and aspartate 494 each bind ATP.

It belongs to the chaperonin (HSP60) family. In terms of assembly, forms a cylinder of 14 subunits composed of two heptameric rings stacked back-to-back. Interacts with the co-chaperonin GroES.

Its subcellular location is the cytoplasm. It catalyses the reaction ATP + H2O + a folded polypeptide = ADP + phosphate + an unfolded polypeptide.. Together with its co-chaperonin GroES, plays an essential role in assisting protein folding. The GroEL-GroES system forms a nano-cage that allows encapsulation of the non-native substrate proteins and provides a physical environment optimized to promote and accelerate protein folding. This chain is Chaperonin GroEL, found in Janthinobacterium sp. (strain Marseille) (Minibacterium massiliensis).